The sequence spans 690 residues: Secreted LysM effector Vd5LysM (690 aa).

N-linked (GlcNAc...) asparagine glycosylation is found at Asn-4 and Asn-69. LysM domains lie at 203-248, 253-301, and 341-387; these read TQYT…SLCI, DTVT…TLCI, and RWYN…SYCV. N-linked (GlcNAc...) asparagine glycans are attached at residues Asn-260, Asn-295, Asn-375, Asn-410, Asn-423, and Asn-492. The disordered stretch occupies residues 523–546; sequence PATATTGDGGPTPPAPTHSGQPQD. Residues 549 to 596 enclose the LysM 4 domain; it reads TWHVVSSGDSCQSVADDAGISRDQFHDWNPAVGRDCSTNFWLGQAYCV. The span at 606–619 shows a compositional bias: low complexity; that stretch reads STVASSTTSSVTPG. Residues 606–636 form a disordered region; it reads STVASSTTSSVTPGPSKPEPPGPTHTGQPSD. Residues 639–686 form the LysM 5 domain; that stretch reads EWDVVETGDTCGSLAESNDISLSQFFDWNPAVSRDCVANFWIGQAYCI.

This sequence belongs to the secreted LysM effector family.

Functionally, might have a role in sequestration of chitin oligosaccharides (breakdown products of fungal cell walls that are released during invasion and act as triggers of host immunity) to dampen host defense. Does not play an important role during host colonization. This is Secreted LysM effector Vd5LysM from Verticillium dahliae (strain VdLs.17 / ATCC MYA-4575 / FGSC 10137) (Verticillium wilt).